A 293-amino-acid chain; its full sequence is ATP phosphoribosyltransferase (293 aa).

It belongs to the ATP phosphoribosyltransferase family. Long subfamily. It depends on Mg(2+) as a cofactor.

It localises to the cytoplasm. The catalysed reaction is 1-(5-phospho-beta-D-ribosyl)-ATP + diphosphate = 5-phospho-alpha-D-ribose 1-diphosphate + ATP. It functions in the pathway amino-acid biosynthesis; L-histidine biosynthesis; L-histidine from 5-phospho-alpha-D-ribose 1-diphosphate: step 1/9. Its activity is regulated as follows. Feedback inhibited by histidine. In terms of biological role, catalyzes the condensation of ATP and 5-phosphoribose 1-diphosphate to form N'-(5'-phosphoribosyl)-ATP (PR-ATP). Has a crucial role in the pathway because the rate of histidine biosynthesis seems to be controlled primarily by regulation of HisG enzymatic activity. This is ATP phosphoribosyltransferase from Solidesulfovibrio magneticus (strain ATCC 700980 / DSM 13731 / RS-1) (Desulfovibrio magneticus).